We begin with the raw amino-acid sequence, 325 residues long: Glycerol-3-phosphate dehydrogenase [NAD(P)+] (325 aa).

NADPH contacts are provided by serine 14, phenylalanine 15, arginine 35, and lysine 109. The sn-glycerol 3-phosphate site is built by lysine 109 and glycine 137. An NADPH-binding site is contributed by alanine 141. Residues lysine 192, aspartate 247, serine 257, arginine 258, and asparagine 259 each contribute to the sn-glycerol 3-phosphate site. Lysine 192 (proton acceptor) is an active-site residue. Arginine 258 contributes to the NADPH binding site. Residues leucine 282 and glutamate 284 each contribute to the NADPH site.

Belongs to the NAD-dependent glycerol-3-phosphate dehydrogenase family.

Its subcellular location is the cytoplasm. It catalyses the reaction sn-glycerol 3-phosphate + NAD(+) = dihydroxyacetone phosphate + NADH + H(+). The catalysed reaction is sn-glycerol 3-phosphate + NADP(+) = dihydroxyacetone phosphate + NADPH + H(+). Its pathway is membrane lipid metabolism; glycerophospholipid metabolism. Functionally, catalyzes the reduction of the glycolytic intermediate dihydroxyacetone phosphate (DHAP) to sn-glycerol 3-phosphate (G3P), the key precursor for phospholipid synthesis. This is Glycerol-3-phosphate dehydrogenase [NAD(P)+] from Rickettsia conorii (strain ATCC VR-613 / Malish 7).